Here is a 117-residue protein sequence, read N- to C-terminus: Putative pterin-4-alpha-carbinolamine dehydratase (117 aa).

This sequence belongs to the pterin-4-alpha-carbinolamine dehydratase family.

The enzyme catalyses (4aS,6R)-4a-hydroxy-L-erythro-5,6,7,8-tetrahydrobiopterin = (6R)-L-erythro-6,7-dihydrobiopterin + H2O. The protein is Putative pterin-4-alpha-carbinolamine dehydratase of Aeromonas salmonicida (strain A449).